A 1453-amino-acid chain; its full sequence is Chromatin remodeling regulator CECR2 (1453 aa).

Residues valine 170–glycine 237 are disordered. Positions threonine 197–lysine 209 are enriched in basic residues. Residues leucine 210–glutamate 222 are compositionally biased toward basic and acidic residues. The segment covering asparagine 223–glycine 234 has biased composition (polar residues). Serine 402 carries the phosphoserine modification. The Bromo domain occupies phenylalanine 414–histidine 518. Residue threonine 526 is modified to Phosphothreonine. Disordered stretches follow at residues glutamate 536–phenylalanine 667, histidine 767–histidine 796, glycine 827–methionine 868, valine 884–tyrosine 1020, valine 1046–arginine 1072, leucine 1131–glycine 1308, methionine 1331–glutamine 1368, and glutamine 1396–serine 1453. Serine 551 carries the phosphoserine modification. Positions glycine 637–glycine 649 are enriched in polar residues. Residues glutamate 655–histidine 664 are compositionally biased toward pro residues. Pro residues predominate over residues proline 887 to phenylalanine 905. Serine 983 is modified (phosphoserine). A compositionally biased stretch (basic and acidic residues) spans glutamine 985–alanine 998. Residues serine 999 to tyrosine 1020 show a composition bias toward polar residues. An asymmetric dimethylarginine mark is found at arginine 1166 and arginine 1172. Low complexity-rich tracts occupy residues tyrosine 1173–glutamine 1187 and glutamine 1202–proline 1211. The segment covering asparagine 1228–aspartate 1250 has biased composition (polar residues). The span at glycine 1265–asparagine 1289 shows a compositional bias: basic and acidic residues. At serine 1280 the chain carries Phosphoserine. Composition is skewed to polar residues over residues asparagine 1291 to aspartate 1304 and methionine 1331 to histidine 1346. The segment covering tyrosine 1352 to proline 1364 has biased composition (pro residues).

Component of the CERF-1 ISWI chromatin remodeling complex (also called the CECR2-containing remodeling factor (CERF) complex) at least composed of CECR2 and SMARCA1. Component of the CERF-5 ISWI chromatin remodeling complex at least composed of CECR2 and SMARCA5/SNF2H. LUZP1 is detected as part of the CERF-1 and CERF-5 complexes in embryonic stem (ES) cells where it is involved in complex stabilization but is not detected in the complexes in the testis. Interacts with CCAR2; CCAR2 may form part of the CERF-1 and/or CEF-5 ISWI chromatin remodeling complexes in ES cells. Interacts with acetylated lysine residues on histone H2A and H3 (in vitro). Interacts with LRPPRC.

The protein resides in the nucleus. Regulatory subunit of the ATP-dependent CERF-1 and CERF-5 ISWI chromatin remodeling complexes, which form ordered nucleosome arrays on chromatin and facilitate access to DNA during DNA-templated processes such as DNA replication, transcription, and repair. The complexes do not have the ability to slide mononucleosomes to the center of a DNA template. The CERF-1 ISWI chromatin remodeling complex has a lower ATP hydrolysis rate than the CERF-5 ISWI chromatin remodeling complex. Plays a role in various processes during development: required during embryogenesis for neural tube closure and inner ear development. In adults, required for spermatogenesis, via the formation of ISWI-type chromatin complexes. In histone-modifying complexes, CECR2 recognizes and binds acylated histones: binds histones that are acetylated and/or butyrylated. May also be involved through its interaction with LRPPRC in the integration of cytoskeletal network with vesicular trafficking, nucleocytosolic shuttling, transcription, chromosome remodeling and cytokinesis. The polypeptide is Chromatin remodeling regulator CECR2 (Mus musculus (Mouse)).